The primary structure comprises 324 residues: Malate dehydrogenase (324 aa).

NAD(+)-binding positions include Gly-20 to Gly-25 and Asp-44. Substrate is bound by residues Arg-93 and Arg-99. NAD(+) contacts are provided by residues Asn-106 and Val-129–Asn-131. Asn-131 and Arg-162 together coordinate substrate. His-186 functions as the Proton acceptor in the catalytic mechanism.

Belongs to the LDH/MDH superfamily. MDH type 3 family.

It carries out the reaction (S)-malate + NAD(+) = oxaloacetate + NADH + H(+). Catalyzes the reversible oxidation of malate to oxaloacetate. The polypeptide is Malate dehydrogenase (Synechocystis sp. (strain ATCC 27184 / PCC 6803 / Kazusa)).